The following is a 36-amino-acid chain: Photosystem I reaction center subunit VIII (36 aa).

Residues leucine 6–leucine 28 form a helical membrane-spanning segment.

This sequence belongs to the PsaI family.

It is found in the plastid. It localises to the chloroplast thylakoid membrane. May help in the organization of the PsaL subunit. In Amborella trichopoda, this protein is Photosystem I reaction center subunit VIII.